The chain runs to 388 residues: MNLHEYQAKSLFAEYGLPVSEGFACDTAQEAVEAAGRIGGNLWVVKCQVHAGGRGKAGGVKVTGDKEEIRAFAEYWLGKNLVTYQTDEKGQPVAKILVESCTDIANELYLGAVVDRATRRVVFMASTEGGVEIEKVAEETPELIHKAIIDPLTGPQPFQARDLGFKLGLNPTQMKQFTKIFMGLATMFVDHDFALLEINPLVITTEGNLHCLDGKIGIDGNALFRQPKIKAMHDPSQDDAREAHAAMFELNYVALDGNVGCMVNGAGLAMGTMDIVNLHGGKPANFLDVGGGATKERVAEAFKIILSDSNVKAVLVNIFGGIVRCDMIAEGIIGAVKEVGVKVPVVVRLEGTNAELGREVLAKSGLDIIAANSLTDAAELVVKAAEGK.

The ATP-grasp domain maps to 9–244 (KSLFAEYGLP…PSQDDAREAH (236 aa)). Residues K46, 53-55 (GRG), E99, T102, and E107 each bind ATP. 2 residues coordinate Mg(2+): N199 and D213. Residues N264 and 321–323 (GIV) each bind substrate.

This sequence belongs to the succinate/malate CoA ligase beta subunit family. Heterotetramer of two alpha and two beta subunits. It depends on Mg(2+) as a cofactor.

It catalyses the reaction succinate + ATP + CoA = succinyl-CoA + ADP + phosphate. The enzyme catalyses GTP + succinate + CoA = succinyl-CoA + GDP + phosphate. Its pathway is carbohydrate metabolism; tricarboxylic acid cycle; succinate from succinyl-CoA (ligase route): step 1/1. Functionally, succinyl-CoA synthetase functions in the citric acid cycle (TCA), coupling the hydrolysis of succinyl-CoA to the synthesis of either ATP or GTP and thus represents the only step of substrate-level phosphorylation in the TCA. The beta subunit provides nucleotide specificity of the enzyme and binds the substrate succinate, while the binding sites for coenzyme A and phosphate are found in the alpha subunit. This is Succinate--CoA ligase [ADP-forming] subunit beta from Shewanella oneidensis (strain ATCC 700550 / JCM 31522 / CIP 106686 / LMG 19005 / NCIMB 14063 / MR-1).